A 215-amino-acid polypeptide reads, in one-letter code: UPF0502 protein YceH (215 aa).

This sequence belongs to the UPF0502 family.

The protein is UPF0502 protein YceH of Salmonella paratyphi A (strain ATCC 9150 / SARB42).